A 296-amino-acid polypeptide reads, in one-letter code: Glycine--tRNA ligase alpha subunit (296 aa).

This sequence belongs to the class-II aminoacyl-tRNA synthetase family. As to quaternary structure, tetramer of two alpha and two beta subunits.

The protein localises to the cytoplasm. It carries out the reaction tRNA(Gly) + glycine + ATP = glycyl-tRNA(Gly) + AMP + diphosphate. This Listeria monocytogenes serotype 4b (strain CLIP80459) protein is Glycine--tRNA ligase alpha subunit.